The chain runs to 60 residues: Arabinogalactan protein 12 (60 aa).

An N-terminal signal peptide occupies residues 1–27 (MESMKMKLIVVLMVAIVAFSAVGNVAA). A Pyrrolidone carboxylic acid modification is found at Q28. P32, P34, and P36 each carry 4-hydroxyproline. P32, P34, and P36 each carry an O-linked (Ara...) hydroxyproline glycan. S38 carries the GPI-anchor amidated serine lipid modification. A propeptide spans 39 to 60 (DAAMFVPALFASVAALASGFLF) (removed in mature form).

The protein belongs to the AG-peptide AGP family. Contains 4-hydroxyproline; hydroxylated on Pro-32, Pro-34 and Pro-36. In terms of processing, O-glycosylated on hydroxyprolines; noncontiguous hydroxylproline residues are glycosylated with arabinogalactan. In terms of tissue distribution, expressed in reproductive tissues. Expressed in chalaza, funiculus, stigma, septum, style and transmitting tract.

The protein localises to the cell membrane. Its function is as follows. Proteoglycan that seems to be implicated in diverse developmental roles such as differentiation, cell-cell recognition, embryogenesis and programmed cell death. The protein is Arabinogalactan protein 12 of Arabidopsis thaliana (Mouse-ear cress).